A 618-amino-acid chain; its full sequence is Probable protein disulfide-isomerase A4 (618 aa).

The first 21 residues, 1-21 (MMFDRRFFALVVLLCVSAVRS), serve as a signal peptide directing secretion. Thioredoxin domains follow at residues 22–139 (TEDA…SRVD), 138–254 (VDPN…DQSK), and 480–609 (SSGK…KHGV). 3 cysteine pairs are disulfide-bonded: C65–C68, C176–C179, and C529–C532. A Prevents secretion from ER motif is present at residues 615–618 (KDEL).

This sequence belongs to the protein disulfide isomerase family.

The protein resides in the endoplasmic reticulum lumen. The catalysed reaction is Catalyzes the rearrangement of -S-S- bonds in proteins.. In Caenorhabditis elegans, this protein is Probable protein disulfide-isomerase A4.